The following is a 591-amino-acid chain: Frizzled and smoothened-like protein F (591 aa).

The first 17 residues, methionine 1 to glycine 17, serve as a signal peptide directing secretion. Over phenylalanine 18 to lysine 244 the chain is Extracellular. Residues isoleucine 30–proline 177 form the FZ domain. Disulfide bonds link cysteine 35-cysteine 105, cysteine 48-cysteine 98, and cysteine 123-cysteine 174. N-linked (GlcNAc...) asparagine glycans are attached at residues asparagine 167, asparagine 187, asparagine 202, and asparagine 230. A helical membrane pass occupies residues isoleucine 245–asparagine 265. Topologically, residues lysine 266–threonine 275 are cytoplasmic. The chain crosses the membrane as a helical span at residues cysteine 276–glycine 296. Topologically, residues tyrosine 297–glycine 321 are extracellular. The helical transmembrane segment at alanine 322 to leucine 342 threads the bilayer. The Cytoplasmic portion of the chain corresponds to tyrosine 343–lysine 353. A helical membrane pass occupies residues phenylalanine 354 to alanine 374. The Extracellular segment spans residues threonine 375–serine 397. Residues leucine 398–isoleucine 418 form a helical membrane-spanning segment. Over histidine 419–proline 442 the chain is Cytoplasmic. A helical membrane pass occupies residues leucine 443–isoleucine 463. Residues glutamate 464–serine 495 are Extracellular-facing. Asparagine 483 carries an N-linked (GlcNAc...) asparagine glycan. The helical transmembrane segment at tyrosine 496 to phenylalanine 516 threads the bilayer. At tyrosine 517–asparagine 591 the chain is on the cytoplasmic side. Low complexity predominate over residues serine 538–aspartate 571. The segment at serine 538–asparagine 573 is disordered.

This sequence belongs to the G-protein coupled receptor Fz/Smo family.

The protein resides in the membrane. The chain is Frizzled and smoothened-like protein F (fslF) from Dictyostelium discoideum (Social amoeba).